The sequence spans 537 residues: Phosphoenolpyruvate carboxykinase (ATP) (537 aa).

Residues Arg61, Tyr195, and Lys201 each contribute to the substrate site. Residues Lys201, His220, and 236 to 244 (GLSGTGKTT) each bind ATP. Residues Lys201 and His220 each contribute to the Mn(2+) site. Asp257 provides a ligand contact to Mn(2+). ATP contacts are provided by Glu285, Arg323, and Thr448. Arg323 lines the substrate pocket.

The protein belongs to the phosphoenolpyruvate carboxykinase (ATP) family. It depends on Mn(2+) as a cofactor.

Its subcellular location is the cytoplasm. The catalysed reaction is oxaloacetate + ATP = phosphoenolpyruvate + ADP + CO2. The protein operates within carbohydrate biosynthesis; gluconeogenesis. Functionally, involved in the gluconeogenesis. Catalyzes the conversion of oxaloacetate (OAA) to phosphoenolpyruvate (PEP) through direct phosphoryl transfer between the nucleoside triphosphate and OAA. The polypeptide is Phosphoenolpyruvate carboxykinase (ATP) (Rhodopseudomonas palustris (strain ATCC BAA-98 / CGA009)).